A 1030-amino-acid chain; its full sequence is Probable serine/threonine-protein kinase SIS8 (1030 aa).

Composition is skewed to polar residues over residues 44 to 58 (PNQS…STTK) and 399 to 419 (YSAS…NGIE). Disordered stretches follow at residues 44–84 (PNQS…PEIK), 399–474 (YSAS…KAPF), 555–625 (TVES…ASST), and 689–736 (LGSN…SDCD). 3 stretches are compositionally biased toward basic and acidic residues: residues 426–435 (TEFRTGEHRS), 458–471 (ISRE…KVEK), and 560–580 (NSTE…EGRH). The segment covering 613–625 (SQSDSSHSEASST) has biased composition (low complexity). The region spanning 748–1003 (ITVGERIGLG…AEIMASLKRL (256 aa)) is the Protein kinase domain. Residues 754 to 762 (IGLGSYGEV) and K775 contribute to the ATP site. D871 acts as the Proton acceptor in catalysis. Residues 1007–1023 (VTGSNIPRPVPSSSSLP) are compositionally biased toward polar residues. The tract at residues 1007-1030 (VTGSNIPRPVPSSSSLPTEHEQKD) is disordered.

This sequence belongs to the protein kinase superfamily. Ser/Thr protein kinase family. Interacts with UGT72E1. As to expression, expressed roots, rosette and cauline leaves, and at lower levels in flowers and siliques.

Its subcellular location is the nucleus. The catalysed reaction is L-seryl-[protein] + ATP = O-phospho-L-seryl-[protein] + ADP + H(+). The enzyme catalyses L-threonyl-[protein] + ATP = O-phospho-L-threonyl-[protein] + ADP + H(+). Acts as a negative regulator of salt tolerance. Mediates sugar response during early seedling development. This Arabidopsis thaliana (Mouse-ear cress) protein is Probable serine/threonine-protein kinase SIS8.